Here is a 626-residue protein sequence, read N- to C-terminus: tRNA uridine 5-carboxymethylaminomethyl modification enzyme MnmG (626 aa).

FAD is bound at residue glycine 14–glycine 19. Glycine 273 to phenylalanine 287 provides a ligand contact to NAD(+).

It belongs to the MnmG family. As to quaternary structure, homodimer. Heterotetramer of two MnmE and two MnmG subunits. The cofactor is FAD.

Its subcellular location is the cytoplasm. Its function is as follows. NAD-binding protein involved in the addition of a carboxymethylaminomethyl (cmnm) group at the wobble position (U34) of certain tRNAs, forming tRNA-cmnm(5)s(2)U34. The polypeptide is tRNA uridine 5-carboxymethylaminomethyl modification enzyme MnmG (Caldicellulosiruptor saccharolyticus (strain ATCC 43494 / DSM 8903 / Tp8T 6331)).